The primary structure comprises 133 residues: Small ribosomal subunit protein uS8 (133 aa).

The protein belongs to the universal ribosomal protein uS8 family. Part of the 30S ribosomal subunit. Contacts proteins S5 and S12.

Functionally, one of the primary rRNA binding proteins, it binds directly to 16S rRNA central domain where it helps coordinate assembly of the platform of the 30S subunit. The polypeptide is Small ribosomal subunit protein uS8 (Micrococcus luteus (Micrococcus lysodeikticus)).